A 61-amino-acid polypeptide reads, in one-letter code: Probradykinin-2 (61 aa).

A signal peptide spans 1–22 (MSFLKKSLFLVLFLGLVSFSIC). Positions 23–50 (EEEKRETEEEENEDEIEEQSEEKKRFEP) are excised as a propeptide. The disordered stretch occupies residues 24–61 (EEKRETEEEENEDEIEEQSEEKKRFEPVPPGFTPFRQT). Acidic residues predominate over residues 30-42 (EEEENEDEIEEQS). At proline 52 the chain carries 4-hydroxyproline.

This sequence belongs to the frog skin active peptide (FSAP) family. Bradykinin-related peptide subfamily. As to expression, expressed by the skin glands.

It localises to the secreted. In terms of biological role, may produce in vitro relaxation of rat arterial smooth muscle and constriction of intestinal smooth muscle. May target bradykinin receptors (BDKRB). This chain is Probradykinin-2, found in Pithecopus azureus (Orange-legged monkey tree frog).